Reading from the N-terminus, the 556-residue chain is Olefin beta-lactone synthetase (556 aa).

Residues 187–195 (TSGSTGVPK), 321–326 (TPYGAT), Asp-430, and Arg-445 each bind ATP.

It belongs to the ATP-dependent AMP-binding enzyme family. As to quaternary structure, monomer. Forms a complex with OleB and OleD.

Its subcellular location is the cytoplasm. It carries out the reaction a (2R,3S)-2-alkyl-3-hydroxyalkanoate + ATP = a cis-3-alkyl-4-alkyloxetan-2-one + AMP + diphosphate. Its function is as follows. Involved in olefin biosynthesis. Catalyzes the conversion of 2-alkyl-3-hydroxyalkanoic acids to beta-lactones in the presence of ATP. In Xanthomonas campestris pv. campestris (strain ATCC 33913 / DSM 3586 / NCPPB 528 / LMG 568 / P 25), this protein is Olefin beta-lactone synthetase.